A 160-amino-acid chain; its full sequence is uncharacterized protein (160 aa).

The signal sequence occupies residues methionine 1–glutamine 25.

This is an uncharacterized protein from Invertebrate iridescent virus 6 (IIV-6).